Reading from the N-terminus, the 258-residue chain is MMDWNNKNVVYVGGFSGFGYQVCQMMMKKPMKHLIVCSRMENVEMLKKLQAINTSVKVMFVQMNIADYASIVKGVKQVIGHVGHVDVLINGVGGLADKDVETTVAVNLTGLINTTLMFMPYMDKTQSGHGGMVVSISSVYGLEPGPAFSVYSAAKHGGIGFTRSMADEHLYHKTGVAFMCICPAMTSTELMMNKRDMNWMKWVPHSEEMWKMVMDAKMQTPEECAVNMMTAMEQAKNGAIYICSTSGMKEITPTVYMH.

NAD(+) is bound at residue 10–34 (VYVGGFSGFGYQVCQMMMKKPMKHL). Ser-138 provides a ligand contact to substrate. Tyr-151 acts as the Proton acceptor in catalysis.

Belongs to the short-chain dehydrogenases/reductases (SDR) family.

This is Development-specific 25 kDa protein from Sarcophaga peregrina (Flesh fly).